The following is a 37-amino-acid chain: Cytochrome b6-f complex subunit 5 (37 aa).

Residues 5–25 form a helical membrane-spanning segment; that stretch reads LLSGIVLGLIPITLAGLFVTA.

It belongs to the PetG family. The 4 large subunits of the cytochrome b6-f complex are cytochrome b6, subunit IV (17 kDa polypeptide, PetD), cytochrome f and the Rieske protein, while the 4 small subunits are PetG, PetL, PetM and PetN. The complex functions as a dimer.

It localises to the plastid. It is found in the chloroplast thylakoid membrane. Functionally, component of the cytochrome b6-f complex, which mediates electron transfer between photosystem II (PSII) and photosystem I (PSI), cyclic electron flow around PSI, and state transitions. PetG is required for either the stability or assembly of the cytochrome b6-f complex. The chain is Cytochrome b6-f complex subunit 5 from Chaetosphaeridium globosum (Charophycean green alga).